The primary structure comprises 267 residues: S-adenosylmethionine decarboxylase proenzyme (267 aa).

The active-site Schiff-base intermediate with substrate; via pyruvic acid is the Ser-114. Ser-114 carries the post-translational modification Pyruvic acid (Ser); by autocatalysis. His-119 acts as the Proton acceptor; for processing activity in catalysis. Catalysis depends on Cys-142, which acts as the Proton donor; for catalytic activity.

Belongs to the prokaryotic AdoMetDC family. Type 2 subfamily. In terms of assembly, heterooctamer of four alpha and four beta chains arranged as a tetramer of alpha/beta heterodimers. Requires pyruvate as cofactor. Is synthesized initially as an inactive proenzyme. Formation of the active enzyme involves a self-maturation process in which the active site pyruvoyl group is generated from an internal serine residue via an autocatalytic post-translational modification. Two non-identical subunits are generated from the proenzyme in this reaction, and the pyruvate is formed at the N-terminus of the alpha chain, which is derived from the carboxyl end of the proenzyme. The post-translation cleavage follows an unusual pathway, termed non-hydrolytic serinolysis, in which the side chain hydroxyl group of the serine supplies its oxygen atom to form the C-terminus of the beta chain, while the remainder of the serine residue undergoes an oxidative deamination to produce ammonia and the pyruvoyl group blocking the N-terminus of the alpha chain.

It catalyses the reaction S-adenosyl-L-methionine + H(+) = S-adenosyl 3-(methylsulfanyl)propylamine + CO2. The protein operates within amine and polyamine biosynthesis; S-adenosylmethioninamine biosynthesis; S-adenosylmethioninamine from S-adenosyl-L-methionine: step 1/1. In terms of biological role, catalyzes the decarboxylation of S-adenosylmethionine to S-adenosylmethioninamine (dcAdoMet), the propylamine donor required for the synthesis of the polyamines spermine and spermidine from the diamine putrescine. This chain is S-adenosylmethionine decarboxylase proenzyme, found in Erwinia tasmaniensis (strain DSM 17950 / CFBP 7177 / CIP 109463 / NCPPB 4357 / Et1/99).